The primary structure comprises 375 residues: Chaperone protein DnaJ (375 aa).

The J domain maps to 5 to 70 (DYYEILGVSK…QKRAAYDQYG (66 aa)). Residues 130 to 208 (GVTKEIRIPT…CHGHGRVEKS (79 aa)) form a CR-type zinc finger. Zn(2+)-binding residues include C143, C146, C160, C163, C182, C185, C196, and C199. CXXCXGXG motif repeat units follow at residues 143-150 (CDVCHGSG), 160-167 (CPTCHGSG), 182-189 (CPHCQGRG), and 196-203 (CHKCHGHG).

This sequence belongs to the DnaJ family. Homodimer. It depends on Zn(2+) as a cofactor.

The protein localises to the cytoplasm. In terms of biological role, participates actively in the response to hyperosmotic and heat shock by preventing the aggregation of stress-denatured proteins and by disaggregating proteins, also in an autonomous, DnaK-independent fashion. Unfolded proteins bind initially to DnaJ; upon interaction with the DnaJ-bound protein, DnaK hydrolyzes its bound ATP, resulting in the formation of a stable complex. GrpE releases ADP from DnaK; ATP binding to DnaK triggers the release of the substrate protein, thus completing the reaction cycle. Several rounds of ATP-dependent interactions between DnaJ, DnaK and GrpE are required for fully efficient folding. Also involved, together with DnaK and GrpE, in the DNA replication of plasmids through activation of initiation proteins. The chain is Chaperone protein DnaJ from Salmonella paratyphi A (strain ATCC 9150 / SARB42).